Consider the following 120-residue polypeptide: Phosphoribosyl-AMP cyclohydrolase (120 aa).

Asp75 contacts Mg(2+). Cys76 contributes to the Zn(2+) binding site. Residues Asp77 and Asp79 each coordinate Mg(2+). Zn(2+) is bound by residues Cys92 and Cys99.

Belongs to the PRA-CH family. As to quaternary structure, homodimer. The cofactor is Mg(2+). It depends on Zn(2+) as a cofactor.

It is found in the cytoplasm. The enzyme catalyses 1-(5-phospho-beta-D-ribosyl)-5'-AMP + H2O = 1-(5-phospho-beta-D-ribosyl)-5-[(5-phospho-beta-D-ribosylamino)methylideneamino]imidazole-4-carboxamide. Its pathway is amino-acid biosynthesis; L-histidine biosynthesis; L-histidine from 5-phospho-alpha-D-ribose 1-diphosphate: step 3/9. Catalyzes the hydrolysis of the adenine ring of phosphoribosyl-AMP. The polypeptide is Phosphoribosyl-AMP cyclohydrolase (Methanosarcina mazei (strain ATCC BAA-159 / DSM 3647 / Goe1 / Go1 / JCM 11833 / OCM 88) (Methanosarcina frisia)).